The following is a 1052-amino-acid chain: MAEASEAMCLEGAEWELSKENIQPLRHGRVMSTLQGALAKQESAGHTALQQQKRAFESEIRFYSGDDPLDVWDRYINWTEQNYPQGGKESNMSALVERAIEALQGETRYYNDPRFLSLWIKLGHLCNEPLDMYSYLQSQGIGVSLAQFYISWAEEYEARENFKKADIIFQEGIERKAEPLDRLQSQHRQFQSRVSRQAFLALGNEEEEALEPSEPQRSSLAELKSRGKKMARAPISRVGGALKAPGQSRGFLNAVPQPVHGNRRITVFDENADTASRTELSKPVAQPWMAPPVPRAKENELQPGPWSTDRPAGRRPHDNPASVTSIPSVLPSFTPYVEESAQQTVMTPCKIEPSINHVLSTRKPGREEGDPLQRVQSHQQGCEEKKEKMMYCKEKIYAGVGEFSFEEIRAEVFRKKLKERREAELLTSAKKREEMQKQIEEMERRLKAMQAVQQEGAGGQQEEKMPTEDPARLQIASGPQEMSGVPLSCSICPLSSNPREISPAENILQEQPDSKGSSMPFSIFDESLSDKKDKSPATGGPQVLNAQRRPLSVLKTTEVGTTNEDVSPDICDELTELEPLSEDAIITGFRNVTLCPNPEDTCDFARAARLASTPFHEILSSKGIAADPEGLLQEEDLDGKAAEAHHTVHHQALIIKKLSPIIEESREATHSSGFSRSSSSAPSTSSIKGFQLLEKLELTNDGAEDAIQSPWCSQYRLQLLKSLLELSAFAEFSVEDRPMPVLEIGKEIELGPEDYVIKQEHLTCDDYRLFWVAPRSSAELTMIKASSQPIPWDFYINLKLKERLNEDYDQLCSCCQYQDGHVVWYQYINCSTLQNLLQHSEFVTHEIIVLIIYNLLTIVEKLHRAEIVHGDLSPRSLILRNRIHDPYDYVNKDDHAVRIMDFSYSVDLRVQLDAFAYSGFRTAQILEGQKILANCSSPYHVDLLGIADLAHLLLFKEHLHVFWDGLLWKLSQSTSELKDSELWNKFFVRILNASDKSTVSVLGELAAEMGGAFDATFHSHLNRALWKLGKTISPEALLTQQDKQPGGSQSPA.

The region spanning 56–219 is the BUB1 N-terminal domain; sequence FESEIRFYSG…LEPSEPQRSS (164 aa). Residues 105–112 carry the Nuclear localization signal motif; the sequence is GETRYYND. The tract at residues 146–179 is necessary for interaction with KNL1; sequence AQFYISWAEEYEARENFKKADIIFQEGIERKAEP. Disordered stretches follow at residues 206–256 and 272–327; these read EEEA…NAVP and ADTA…TSIP. The short motif at 217-225 is the D-box element; sequence RSSLAELKS. Residue Lys243 is modified to N6-acetyllysine; by PCAF. Phosphoserine is present on Ser360. The disordered stretch occupies residues 361–381; the sequence is TRKPGREEGDPLQRVQSHQQG. Ser428 is modified (phosphoserine). The disordered stretch occupies residues 496 to 552; sequence SNPREISPAENILQEQPDSKGSSMPFSIFDESLSDKKDKSPATGGPQVLNAQRRPLS. Positions 508–520 are enriched in polar residues; sequence LQEQPDSKGSSMP. Phosphoserine occurs at positions 535 and 659. The residue at position 665 (Ser665) is a Phosphoserine; by PLK1. Ser686 is subject to Phosphoserine. In terms of domain architecture, Protein kinase spans 756–1040; it reads VIKQEHLTCD…TISPEALLTQ (285 aa). 762-770 contributes to the ATP binding site; sequence LTCDDYRLF. Thr781 carries the phosphothreonine; by PLK1 modification. Position 784 (Lys784) interacts with ATP. Residue Asp871 is the Proton acceptor of the active site. Phosphothreonine; by PLK1 is present on Thr998. Phosphoserine occurs at positions 1033 and 1050.

The protein belongs to the protein kinase superfamily. Ser/Thr protein kinase family. BUB1 subfamily. Interacts with CENPE. Interacts with PLK1. Part of a complex containing BUB3, CDC20 and BUB1B. Interacts with anaphase-promoting complex/cyclosome (APC/C). Interacts with KNL1. Interacts with KAT2B. Interacts with RIPK3. Interacts with the closed conformation form of MAD2L1. Interacts with CDC20. Proteolytically cleaved by caspase-3 in a cell cycle specific manner. The cleavage might be involved in the durability of the cell cycle delay. In terms of processing, acetylation at Lys-243 regulates its degradation and timing in anaphase entry. Post-translationally, ubiquitinated. Degraded by the proteasome. Ubiquitinated by UBR5, promoting disassembly of the mitotic checkpoint complex from the APC/C complex. Sumoylated with SUMO2 and SUMO3. The sumoylation mediates the association with CENPE at the kinetochore. In terms of processing, autophosphorylated in vitro. Intramolecular autophosphorylation stimulated by CENPE. Phosphorylated during mitosis and hyperphosphorylated in mitotically arrested cells. Phosphorylation at Ser-659 and Ser-1033 occurs at kinetochores upon mitotic entry with dephosphorylation at the onset of anaphase. Post-translationally, proteolytically cleaved by caspase-3 in a cell cycle specific manner. The cleavage might be involved in the durability of the cell cycle delay. Caspase-3 cleavage is associated with abrogation of the mitotic checkpoint. The major site of cleavage is at Asp-603. Highly expressed in thymus followed by spleen.

The protein resides in the cytoplasm. It is found in the nucleus. Its subcellular location is the chromosome. It localises to the centromere. The protein localises to the kinetochore. It carries out the reaction L-seryl-[protein] + ATP = O-phospho-L-seryl-[protein] + ADP + H(+). It catalyses the reaction L-threonyl-[protein] + ATP = O-phospho-L-threonyl-[protein] + ADP + H(+). Kinase activity stimulated by CENPE. Essential component of the mitotic checkpoint. Required for normal mitosis progression and tumor suppression. The mitotic checkpoint delays anaphase until all chromosomes are properly attached to the mitotic spindle. One of its checkpoint functions is to inhibit the activity of the anaphase-promoting complex/cyclosome (APC/C) by blocking the binding of CDC20 to APC/C, independently of its kinase activity. The other is to monitor kinetochore activities that depend on the kinetochore motor CENPE. Required for kinetochore localization of CENPE. Negatively regulates PLK1 activity in interphase cells and suppresses centrosome amplification. Also implicated in triggering apoptosis in polyploid cells that exit aberrantly from mitotic arrest. Essential for tumor suppression. May play a role in regulating aging and fertility. The protein is Mitotic checkpoint serine/threonine-protein kinase BUB1 beta (Bub1b) of Mus musculus (Mouse).